Reading from the N-terminus, the 851-residue chain is Internalin J (851 aa).

The first 25 residues, 1 to 25, serve as a signal peptide directing secretion; sequence MKTTKIVIASLVSLTMVSNPLLTFA. LRR repeat units follow at residues 94–115, 116–136, 137–157, 158–179, 180–200, 201–221, 222–243, 244–263, 264–284, 285–306, 316–325, 338–357, 359–368, and 380–402; these read TLTSLDCHNSSITDMTGIEKLT, GLTKLICTSNNITTLDLSQNT, NLTYLACDSNKLTNLDVTPLT, KLTYLNCDTNKLTKLDVSQNPL, LTYLNCARNTLTEIDVSHNTQ, LTELDCHLNKKITKLDVTPQT, QLTTLDCSFNKITELDVSQNKL, LNRLNCDTNNITKLDLNQNI, QLTFLDCSSNKLTEIDVTPLT, QLTYFDCSVNPLTELDVSTLSK, DLLEIDLTHN, KIKELDVTHNTQLYLLDCQA, GITELDLSQN, and ELTELDVSHNTKLKSLSCVNAHI. 4 MucBP domains span residues 506 to 568, 576 to 638, 647 to 709, and 717 to 779; these read PIKG…SQSV, IVAA…AQTV, APEK…SQTV, and IEAA…AQTV. A disordered region spans residues 786–825; it reads NTNTDQPLPTKKPTNTTPTKPSNLKTTEVKKASDTLPKTG. Residues 792–811 are compositionally biased toward low complexity; the sequence is PLPTKKPTNTTPTKPSNLKT. Residues 821 to 825 carry the LPXTG sorting signal motif; it reads LPKTG. T824 bears the Pentaglycyl murein peptidoglycan amidated threonine mark. Positions 825-851 are cleaved as a propeptide — removed by sortase A; that stretch reads GDSAPWKSALLGVFLSSTALVIWKKKK.

This sequence belongs to the internalin family. In terms of assembly, nearly full-length mature protein and an internal LRR-containing fragment interact in vitro with human intestinal mucin-2 (MUC2) but not with mucin-1. LRR fragment binding is slightly better at pH 5.5, (the pH of the intestine) than at pH 7.4.

The protein resides in the secreted. It is found in the cell wall. With respect to regulation, despite being transcribed during bacterial growth in culture the protein is only detected in infected mice. In terms of biological role, involved in several steps of L.monocytogenes infection by both intravenous and oral infection. Probably acts as an adhesion; upon ectopic expression in L.innocula bacteria adhere better to human cell lines. This is Internalin J (inlJ) from Listeria monocytogenes serovar 1/2a (strain ATCC BAA-679 / EGD-e).